Here is an 899-residue protein sequence, read N- to C-terminus: Bifunctional uridylyltransferase/uridylyl-removing enzyme (899 aa).

The tract at residues methionine 1–proline 342 is uridylyltransferase. A uridylyl-removing region spans residues leucine 343–threonine 705. The 123-residue stretch at valine 461–leucine 583 folds into the HD domain. ACT domains follow at residues glutamine 706–proline 784 and isoleucine 816–isoleucine 897.

The protein belongs to the GlnD family. Mg(2+) is required as a cofactor.

The catalysed reaction is [protein-PII]-L-tyrosine + UTP = [protein-PII]-uridylyl-L-tyrosine + diphosphate. The enzyme catalyses [protein-PII]-uridylyl-L-tyrosine + H2O = [protein-PII]-L-tyrosine + UMP + H(+). Its activity is regulated as follows. Uridylyltransferase (UTase) activity is inhibited by glutamine, while glutamine activates uridylyl-removing (UR) activity. In terms of biological role, modifies, by uridylylation and deuridylylation, the PII regulatory proteins (GlnB and homologs), in response to the nitrogen status of the cell that GlnD senses through the glutamine level. Under low glutamine levels, catalyzes the conversion of the PII proteins and UTP to PII-UMP and PPi, while under higher glutamine levels, GlnD hydrolyzes PII-UMP to PII and UMP (deuridylylation). Thus, controls uridylylation state and activity of the PII proteins, and plays an important role in the regulation of nitrogen assimilation and metabolism. This Ectopseudomonas mendocina (strain ymp) (Pseudomonas mendocina) protein is Bifunctional uridylyltransferase/uridylyl-removing enzyme.